A 278-amino-acid polypeptide reads, in one-letter code: Shikimate dehydrogenase (NADP(+)) (278 aa).

Residues 14 to 16 (SKS) and Thr-61 contribute to the shikimate site. Catalysis depends on Lys-65, which acts as the Proton acceptor. Asn-86 and Asp-102 together coordinate shikimate. NADP(+)-binding positions include 127-131 (GAGGA), 151-156 (NRTASK), and Met-221. Tyr-223 contributes to the shikimate binding site. Residue Gly-245 participates in NADP(+) binding.

Belongs to the shikimate dehydrogenase family. Homodimer.

The catalysed reaction is shikimate + NADP(+) = 3-dehydroshikimate + NADPH + H(+). The protein operates within metabolic intermediate biosynthesis; chorismate biosynthesis; chorismate from D-erythrose 4-phosphate and phosphoenolpyruvate: step 4/7. Involved in the biosynthesis of the chorismate, which leads to the biosynthesis of aromatic amino acids. Catalyzes the reversible NADPH linked reduction of 3-dehydroshikimate (DHSA) to yield shikimate (SA). This Saccharophagus degradans (strain 2-40 / ATCC 43961 / DSM 17024) protein is Shikimate dehydrogenase (NADP(+)).